The chain runs to 77 residues: UPF0337 protein CE0198 (77 aa).

The segment at 1–77 is disordered; the sequence is MGDLSNKAEG…PDVEHPEAVN (77 aa). Basic and acidic residues-rich tracts occupy residues 30 to 56 and 64 to 77; these read DEGRADQTKADIKEAVSDAGDKIKDGA and QDKDPDVEHPEAVN.

The protein belongs to the UPF0337 (CsbD) family.

The protein is UPF0337 protein CE0198 of Corynebacterium efficiens (strain DSM 44549 / YS-314 / AJ 12310 / JCM 11189 / NBRC 100395).